Consider the following 264-residue polypeptide: Protein-lysine methyltransferase METTL21C (264 aa).

Positions 1–10 are enriched in polar residues; the sequence is MDVCLSSAQQ. A disordered region spans residues 1 to 46; it reads MDVCLSSAQQPGRRGEGLSSPGGWLEAEKKGAPQKDSTGGVLEESN. S-adenosyl-L-methionine is bound by residues Trp92, 120 to 122, Asp141, Trp172, and Ser193; that span reads GAG.

Belongs to the methyltransferase superfamily. METTL21 family. As to quaternary structure, interacts with members of the heat shock protein 70 families; these proteins may possibly be methylation substrates for the enzyme.

The protein resides in the nucleus. It localises to the cytoplasm. The catalysed reaction is L-lysyl-[protein] + S-adenosyl-L-methionine = N(6)-methyl-L-lysyl-[protein] + S-adenosyl-L-homocysteine + H(+). The enzyme catalyses N(6)-methyl-L-lysyl-[protein] + S-adenosyl-L-methionine = N(6),N(6)-dimethyl-L-lysyl-[protein] + S-adenosyl-L-homocysteine + H(+). It catalyses the reaction N(6),N(6)-dimethyl-L-lysyl-[protein] + S-adenosyl-L-methionine = N(6),N(6),N(6)-trimethyl-L-lysyl-[protein] + S-adenosyl-L-homocysteine + H(+). Functionally, protein-lysine N-methyltransferase using S-adenosyl-L-methionine as methyl donor. Mono-di and trimethylates 'Lys-943' of AARS1. The sequence is that of Protein-lysine methyltransferase METTL21C from Homo sapiens (Human).